Reading from the N-terminus, the 532-residue chain is UDP-glucuronosyltransferase 1A4 (532 aa).

A signal peptide spans 1–27 (MVLGVWITLWRLVRLLLLLCVLPWAEG). 2 N-linked (GlcNAc...) asparagine glycosylation sites follow: Asn-141 and Asn-295. The helical transmembrane segment at 490-506 (VIGFLLAIVLTVAFVTF) threads the bilayer.

The protein belongs to the UDP-glycosyltransferase family. In terms of assembly, homodimers. Homooligomer. Interacts with UGT1A1, UGT1A3, UGT1A6, UGT1A7, UGT1A8, UGT1A9 and UGT1A10 to form heterodimers.

The protein resides in the endoplasmic reticulum membrane. It carries out the reaction glucuronate acceptor + UDP-alpha-D-glucuronate = acceptor beta-D-glucuronoside + UDP + H(+). The enzyme catalyses calcidiol + UDP-alpha-D-glucuronate = calcidiol 25-O-(beta-D-glucuronide) + UDP + H(+). The catalysed reaction is calcidiol + UDP-alpha-D-glucuronate = calcidiol 3-O-(beta-D-glucuronide) + UDP + H(+). It catalyses the reaction calcitriol + UDP-alpha-D-glucuronate = calcitriol 25-O-(beta-D-glucuronide) + UDP + H(+). It carries out the reaction (5Z,8Z,11Z,14Z)-eicosatetraenoate + UDP-alpha-D-glucuronate = O-[(5Z),(8Z),(11Z),(14Z)-eicosatetraenoyl]-beta-D-glucuronate + UDP. The enzyme catalyses 15-hydroxy-(5Z,8Z,11Z,13E)-eicosatetraenoate + UDP-alpha-D-glucuronate = 15-O-(beta-D-glucuronosyl)-(5Z,8Z,11Z,14Z)-eicosatetraenoate + UDP + H(+). The catalysed reaction is 20-hydroxy-(5Z,8Z,11Z,14Z)-eicosatetraenoate + UDP-alpha-D-glucuronate = 20-O-(beta-D-glucuronosyl)-(5Z,8Z,11Z,14Z)-eicosatetraenoate + UDP + H(+). Functionally, UDP-glucuronosyltransferase (UGT) that catalyzes phase II biotransformation reactions in which lipophilic substrates are conjugated with glucuronic acid to increase the metabolite's water solubility, thereby facilitating excretion into either the urine or bile. Essential for the elimination and detoxification of drugs, xenobiotics and endogenous compounds. Involved in the glucuronidation of calcidiol, which is the major circulating form of vitamin D3 essential for the regulation of calcium and phosphate homeostasis. Also glucuronidates the biologically active form of vitamin D3, calcitriol, probably leading to its biliary transport and intestinal reabsorption. Involved in the glucuronidation of arachidonic acid (AA) and AA-derived eicosanoids including 15-HETE, 20-HETE and PGB1. In Oryctolagus cuniculus (Rabbit), this protein is UDP-glucuronosyltransferase 1A4 (Ugt1a4).